Reading from the N-terminus, the 341-residue chain is UDP-glucose 4-epimerase (341 aa).

Belongs to the polysaccharide synthase family.

It catalyses the reaction UDP-alpha-D-glucose = UDP-alpha-D-galactose. Its function is as follows. Epimerizes UDP-galactose to UDP-glucose. The polypeptide is UDP-glucose 4-epimerase (capD) (Rickettsia akari (strain Hartford)).